Here is a 223-residue protein sequence, read N- to C-terminus: N-terminal Xaa-Pro-Lys N-methyltransferase 1 (223 aa).

Position 1 is an N-acetylmethionine (M1). T2 is modified (N-acetylthreonine; in N-terminal Xaa-Pro-Lys N-methyltransferase 1, N-terminally processed). Residues G69, R74, D91–T93, L119–Q120, and Q135 contribute to the S-adenosyl-L-methionine site.

The protein belongs to the methyltransferase superfamily. NTM1 family.

Its subcellular location is the nucleus. It carries out the reaction N-terminal L-alanyl-L-prolyl-L-lysyl-[protein] + 3 S-adenosyl-L-methionine = N-terminal N,N,N-trimethyl-L-alanyl-L-prolyl-L-lysyl-[protein] + 3 S-adenosyl-L-homocysteine + 3 H(+). The enzyme catalyses N-terminal L-seryl-L-prolyl-L-lysyl-[protein] + 3 S-adenosyl-L-methionine = N-terminal N,N,N-trimethyl-L-seryl-L-prolyl-L-lysyl-[protein] + 3 S-adenosyl-L-homocysteine + 3 H(+). The catalysed reaction is N-terminal L-prolyl-L-prolyl-L-lysyl-[protein] + 2 S-adenosyl-L-methionine = N-terminal N,N-dimethyl-L-prolyl-L-prolyl-L-lysyl-[protein] + 2 S-adenosyl-L-homocysteine + 2 H(+). Its function is as follows. Distributive alpha-N-methyltransferase that methylates the N-terminus of target proteins containing the N-terminal motif [Ala/Gly/Pro/Ser]-Pro-Lys when the initiator Met is cleaved. Specifically catalyzes mono-, di- or tri-methylation of the exposed alpha-amino group of the Ala, Gly or Ser residue in the [Ala/Gly/Ser]-Pro-Lys motif and mono- or di-methylation of Pro in the Pro-Pro-Lys motif. Some of the substrates may be primed by NTMT2-mediated monomethylation. Catalyzes the trimethylation of the N-terminal Gly in CENPA (after removal of Met-1). Responsible for the N-terminal methylation of KLHL31, MYL2, MYL3, RB1, RCC1, RPL23A and SET. Required during mitosis for normal bipolar spindle formation and chromosome segregation via its action on RCC1. The protein is N-terminal Xaa-Pro-Lys N-methyltransferase 1 (NTMT1) of Homo sapiens (Human).